Reading from the N-terminus, the 101-residue chain is Small ribosomal subunit protein uS14 (101 aa).

Belongs to the universal ribosomal protein uS14 family. Part of the 30S ribosomal subunit. Contacts proteins S3 and S10.

Its function is as follows. Binds 16S rRNA, required for the assembly of 30S particles and may also be responsible for determining the conformation of the 16S rRNA at the A site. The chain is Small ribosomal subunit protein uS14 from Bordetella petrii (strain ATCC BAA-461 / DSM 12804 / CCUG 43448).